A 318-amino-acid polypeptide reads, in one-letter code: Transaldolase (318 aa).

Lysine 132 serves as the catalytic Schiff-base intermediate with substrate.

It belongs to the transaldolase family. Type 1 subfamily. Homodimer.

The protein localises to the cytoplasm. The enzyme catalyses D-sedoheptulose 7-phosphate + D-glyceraldehyde 3-phosphate = D-erythrose 4-phosphate + beta-D-fructose 6-phosphate. It participates in carbohydrate degradation; pentose phosphate pathway; D-glyceraldehyde 3-phosphate and beta-D-fructose 6-phosphate from D-ribose 5-phosphate and D-xylulose 5-phosphate (non-oxidative stage): step 2/3. In terms of biological role, transaldolase is important for the balance of metabolites in the pentose-phosphate pathway. The polypeptide is Transaldolase (Shewanella sediminis (strain HAW-EB3)).